The chain runs to 698 residues: Endogenous retrovirus group K member 21 Env polyprotein (698 aa).

A disordered region spans residues 1-25 (MHPSEMQRKAPPRRRRHRNRAPLTH). An N-terminal signal peptide occupies residues 1–88 (MHPSEMQRKA…ALMIVSMVVS (88 aa)). The span at 10–20 (APPRRRRHRNR) shows a compositional bias: basic residues. Residues 89–631 (LPMPAGAAAA…NLNPVTWVKT (543 aa)) lie on the Extracellular side of the membrane. N-linked (GlcNAc...) asparagine glycosylation is found at N99, N127, N152, N273, N354, N371, and N460. Residues 465 to 485 (FIFTLIAVIMGLIAVTAMAAV) form a fusion peptide region. Residues N506, N553, N565, and N584 are each glycosylated (N-linked (GlcNAc...) asparagine). A helical membrane pass occupies residues 632–652 (IGSTTIINLILILVCLFCLLL). At 653–698 (VCRCTQQLRRDSDHRERAMMTMVVLSKRKGGNVGKSKRDQIVTVSV) the chain is on the cytoplasmic side.

Belongs to the beta type-B retroviral envelope protein family. HERV class-II K(HML-2) env subfamily. In terms of assembly, the surface (SU) and transmembrane (TM) proteins form a heterodimer. SU and TM are attached by noncovalent interactions or by a labile interchain disulfide bond. Specific enzymatic cleavages in vivo yield the mature SU and TM proteins.

Its subcellular location is the cell membrane. It localises to the virion. In terms of biological role, retroviral envelope proteins mediate receptor recognition and membrane fusion during early infection. Endogenous envelope proteins may have kept, lost or modified their original function during evolution. This endogenous envelope protein has lost its original fusogenic properties. Functionally, SU mediates receptor recognition. TM anchors the envelope heterodimer to the viral membrane through one transmembrane domain. The other hydrophobic domain, called fusion peptide, mediates fusion of the viral membrane with the target cell membrane. This Homo sapiens (Human) protein is Endogenous retrovirus group K member 21 Env polyprotein (ERVK-21).